A 213-amino-acid chain; its full sequence is ATP phosphoribosyltransferase (213 aa).

This sequence belongs to the ATP phosphoribosyltransferase family. Short subfamily. In terms of assembly, heteromultimer composed of HisG and HisZ subunits.

The protein localises to the cytoplasm. The catalysed reaction is 1-(5-phospho-beta-D-ribosyl)-ATP + diphosphate = 5-phospho-alpha-D-ribose 1-diphosphate + ATP. It participates in amino-acid biosynthesis; L-histidine biosynthesis; L-histidine from 5-phospho-alpha-D-ribose 1-diphosphate: step 1/9. Catalyzes the condensation of ATP and 5-phosphoribose 1-diphosphate to form N'-(5'-phosphoribosyl)-ATP (PR-ATP). Has a crucial role in the pathway because the rate of histidine biosynthesis seems to be controlled primarily by regulation of HisG enzymatic activity. The sequence is that of ATP phosphoribosyltransferase from Crocosphaera subtropica (strain ATCC 51142 / BH68) (Cyanothece sp. (strain ATCC 51142)).